The chain runs to 132 residues: MKGLTSKIPRALQTGSKMVCADNTGARVVQIVSVFGYHGVKNRQPKMGLGDLATVTVKKGTPDMKRKLVRAVVVRQKKEFRRPNGLRVSFEENAMILLNENGDPRGTDIKGPVAREVAERFPKVGSMATIII.

The protein belongs to the universal ribosomal protein uL14 family. As to quaternary structure, part of the 50S ribosomal subunit. Forms a cluster with proteins L3 and L24e, part of which may contact the 16S rRNA in 2 intersubunit bridges.

Its function is as follows. Binds to 23S rRNA. Forms part of two intersubunit bridges in the 70S ribosome. This is Large ribosomal subunit protein uL14 from Methanocorpusculum labreanum (strain ATCC 43576 / DSM 4855 / Z).